The following is a 932-amino-acid chain: GPI ethanolamine phosphate transferase 1 (932 aa).

Residues 1-8 (MISLNKKL) lie on the Cytoplasmic side of the membrane. A helical transmembrane segment spans residues 9–29 (VLLVGVIFHVAFMWSIFDIYF). At 30–456 (VSPLIHGMKH…TYNWLFLRTL (427 aa)) the chain is on the lumenal side. Asn-138, Asn-202, and Asn-360 each carry an N-linked (GlcNAc...) asparagine glycan. Residues 457 to 477 (VTIGFFGWIAVAFCSYLLAFV) traverse the membrane as a helical segment. The Cytoplasmic portion of the chain corresponds to 478 to 486 (VQSDKPFTT). Residues 487-507 (SLPLKGVAYVALAILSGFFVF) form a helical membrane-spanning segment. The Lumenal segment spans residues 508–509 (QK). A helical transmembrane segment spans residues 510–530 (SPLHYHLYAVFPVVFWEAVLQ). Residues 531–551 (RRTAVAEGISILARRSTSKAP) are Cytoplasmic-facing. The chain crosses the membrane as a helical span at residues 552–572 (ALAAILDIGLSLVLLEAIVYG). The Lumenal segment spans residues 573 to 577 (YFHRE). Residues 578 to 598 (IFSVCFGLATLWPFVHNFTVA) traverse the membrane as a helical segment. Topologically, residues 599–603 (KREWP) are cytoplasmic. A helical membrane pass occupies residues 604–624 (TTLAWVVMCAIMSSFTLLEVV). At 625 to 627 (KVE) the chain is on the lumenal side. The chain crosses the membrane as a helical span at residues 628–648 (SIEQILLSGALMLVIGLVFTI). Topologically, residues 649 to 653 (HLQRK) are cytoplasmic. Residues 654-674 (LALAASTVCVLFAQILLVVAT) traverse the membrane as a helical segment. The Lumenal segment spans residues 675 to 696 (MYFTRESVESLTARNGLPLFSQ). Residues 697–717 (VGGWISLLLSLAVPFLHFLGS) form a helical membrane-spanning segment. Residues 718–737 (DAKDYRLRLLIIFLAFGPTF) lie on the Cytoplasmic side of the membrane. The helical transmembrane segment at 738 to 758 (VILTISWEGFFYVCFFAILVI) threads the bilayer. Residues 759–786 (WIELETQMRDARVTPQTRADLTPGDFRM) lie on the Lumenal side of the membrane. A helical transmembrane segment spans residues 787–807 (ALFTFFMSQIGFFGIGNIASI). Topologically, residues 808-828 (SSFSLDSVYRLIPVFDPFSMG) are cytoplasmic. A helical transmembrane segment spans residues 829 to 849 (ALLMFKILVPFAVLSACLGIL). Over 850-859 (NLKLGVPPSA) the chain is Lumenal. Residues 860-880 (LFSMVLCVSDILTLNFFYLVV) traverse the membrane as a helical segment. Topologically, residues 881-900 (DEGSWLDIGTGISHYCIASG) are cytoplasmic. The helical transmembrane segment at 901–921 (LSLFMMVLEYLSGVLVAGVTI) threads the bilayer. The Lumenal segment spans residues 922 to 932 (APHVSKIKKDM).

Belongs to the PIGG/PIGN/PIGO family. PIGN subfamily.

Its subcellular location is the endoplasmic reticulum membrane. The protein operates within glycolipid biosynthesis; glycosylphosphatidylinositol-anchor biosynthesis. Its function is as follows. Ethanolamine phosphate transferase involved in glycosylphosphatidylinositol-anchor biosynthesis. Transfers ethanolamine phosphate to the first alpha-1,4-linked mannose of the glycosylphosphatidylinositol precursor of GPI-anchor. The chain is GPI ethanolamine phosphate transferase 1 (MCD4) from Yarrowia lipolytica (strain CLIB 122 / E 150) (Yeast).